Here is a 73-residue protein sequence, read N- to C-terminus: Cell division protein ZapB (73 aa).

Positions 3–69 form a coiled coil; that stretch reads LELLSKLETK…EKVTGLVGLL (67 aa). The disordered stretch occupies residues 30–50; sequence EKQKSSTLSEHNQQLNEQNQQ. Positions 41 to 50 are enriched in low complexity; it reads NQQLNEQNQQ.

This sequence belongs to the ZapB family. Homodimer. The ends of the coiled-coil dimer bind to each other, forming polymers. Interacts with FtsZ.

It localises to the cytoplasm. Functionally, non-essential, abundant cell division factor that is required for proper Z-ring formation. It is recruited early to the divisome by direct interaction with FtsZ, stimulating Z-ring assembly and thereby promoting cell division earlier in the cell cycle. Its recruitment to the Z-ring requires functional FtsA or ZipA. This is Cell division protein ZapB from Shewanella putrefaciens (strain CN-32 / ATCC BAA-453).